The chain runs to 128 residues: MKQQVEVRQLREGGYVVIDDEPCEILSISVSKPGKHGAAKARIDAIGIFDSQKRSIVQPVTAKIYVPIVERKRAQIISVTGNVAQLMDLETYETFELEVPEELKDKMEQGREVIYLESLGKRKIERMA.

At lysine 35 the chain carries Hypusine.

This sequence belongs to the eIF-5A family.

Its subcellular location is the cytoplasm. Its function is as follows. Functions by promoting the formation of the first peptide bond. This Archaeoglobus fulgidus (strain ATCC 49558 / DSM 4304 / JCM 9628 / NBRC 100126 / VC-16) protein is Translation initiation factor 5A (eif5a).